We begin with the raw amino-acid sequence, 101 residues long: Guanyl-specific ribonuclease St (101 aa).

Cys4 and Cys54 are joined by a disulfide. Glu61 functions as the Proton acceptor in the catalytic mechanism. The Proton donor role is filled by His91.

Belongs to the ribonuclease N1/T1 family.

It catalyses the reaction [RNA] containing guanosine + H2O = an [RNA fragment]-3'-guanosine-3'-phosphate + a 5'-hydroxy-ribonucleotide-3'-[RNA fragment].. This chain is Guanyl-specific ribonuclease St, found in Saccharopolyspora erythraea (Streptomyces erythraeus).